Reading from the N-terminus, the 95-residue chain is Large ribosomal subunit protein bL25 (95 aa).

The protein belongs to the bacterial ribosomal protein bL25 family. Part of the 50S ribosomal subunit; part of the 5S rRNA/L5/L18/L25 subcomplex. Contacts the 5S rRNA. Binds to the 5S rRNA independently of L5 and L18.

This is one of the proteins that binds to the 5S RNA in the ribosome where it forms part of the central protuberance. This chain is Large ribosomal subunit protein bL25, found in Aeromonas salmonicida (strain A449).